We begin with the raw amino-acid sequence, 307 residues long: N-acetylmuramic acid 6-phosphate etherase (307 aa).

The SIS domain occupies 62–225; the sequence is VVDAFRVGGR…TTASMIRIGK (164 aa). The Proton donor role is filled by Glu-90. Glu-121 is a catalytic residue.

It belongs to the GCKR-like family. MurNAc-6-P etherase subfamily. As to quaternary structure, homodimer.

The catalysed reaction is N-acetyl-D-muramate 6-phosphate + H2O = N-acetyl-D-glucosamine 6-phosphate + (R)-lactate. The protein operates within amino-sugar metabolism; 1,6-anhydro-N-acetylmuramate degradation. It participates in amino-sugar metabolism; N-acetylmuramate degradation. Its pathway is cell wall biogenesis; peptidoglycan recycling. Its function is as follows. Specifically catalyzes the cleavage of the D-lactyl ether substituent of MurNAc 6-phosphate, producing GlcNAc 6-phosphate and D-lactate. Together with AnmK, is also required for the utilization of anhydro-N-acetylmuramic acid (anhMurNAc) either imported from the medium or derived from its own cell wall murein, and thus plays a role in cell wall recycling. The chain is N-acetylmuramic acid 6-phosphate etherase from Brucella anthropi (strain ATCC 49188 / DSM 6882 / CCUG 24695 / JCM 21032 / LMG 3331 / NBRC 15819 / NCTC 12168 / Alc 37) (Ochrobactrum anthropi).